A 105-amino-acid polypeptide reads, in one-letter code: Large ribosomal subunit protein uL24 (105 aa).

It belongs to the universal ribosomal protein uL24 family. As to quaternary structure, part of the 50S ribosomal subunit.

Its function is as follows. One of two assembly initiator proteins, it binds directly to the 5'-end of the 23S rRNA, where it nucleates assembly of the 50S subunit. One of the proteins that surrounds the polypeptide exit tunnel on the outside of the subunit. The sequence is that of Large ribosomal subunit protein uL24 from Mycolicibacterium smegmatis (strain ATCC 700084 / mc(2)155) (Mycobacterium smegmatis).